The following is a 717-amino-acid chain: Radial spoke head protein 6 homolog A (717 aa).

Disordered stretches follow at residues 1 to 65, 503 to 523, 563 to 588, and 672 to 717; these read MGDL…SLSQ, SEEEGDEEEEGGAGRDSYEEN, TEEEEDLGEEEEKADEGPEEVEQEVG, and GPEI…ETDD. Composition is skewed to acidic residues over residues 503–513, 564–585, and 700–717; these read SEEEGDEEEEG, EEEEDLGEEEEKADEGPEEVEQ, and TEEEEEGEEEEEGEETDD.

This sequence belongs to the flagellar radial spoke RSP4/6 family. Component of the axonemal radial spoke 1 (RS1) and 2 (RS2) complexes, at least composed of spoke head proteins RSPH1, RSPH3, RSPH9 and the cilia-specific component RSPH4A or sperm-specific component RSPH6A, spoke stalk proteins RSPH14, DNAJB13, DYDC1, ROPN1L and NME5, and the RS1 complex-specific anchor protein IQUB. Interacts with RSPH1. Interacts with RSPH3B. Interacts with RSPH4A. Interacts with RSPH9. Interacts with RSPH10B. In terms of processing, phosphorylated by PKA. Phosphorylation increases in capacitated sperm.

The protein resides in the cytoplasm. The protein localises to the cytoskeleton. It is found in the flagellum axoneme. Functionally, functions as part of radial spoke complexes in the axoneme of sperm flagella that play an important part in motility. The triple radial spokes (RS1, RS2 and RS3) are required to modulate beating of the sperm flagellum. This is Radial spoke head protein 6 homolog A from Homo sapiens (Human).